Reading from the N-terminus, the 564-residue chain is Beta-N-acetylglucosaminidase/beta-glucosidase (564 aa).

The active-site Nucleophile is the Asp283.

The protein belongs to the glycosyl hydrolase 3 family.

It carries out the reaction Hydrolysis of terminal non-reducing N-acetyl-D-hexosamine residues in N-acetyl-beta-D-hexosaminides.. The enzyme catalyses Hydrolysis of terminal, non-reducing beta-D-glucosyl residues with release of beta-D-glucose.. Catalyzes the cleavage of beta-N-acetyl-D-glucosaminides and beta-D-glucosides. Might be involved in the degradation of glucuronic acid-containing glycosaminoglycans such as hyaluronic acid. This is Beta-N-acetylglucosaminidase/beta-glucosidase (nag3) from Cellulomonas fimi.